The sequence spans 423 residues: MNILLVGSGGREHALAWKIAASPLVKRLVAAPGNPGMAEQCELRAVGPTDVPALVALAKEIAADLVVIGPESSVDAGLADQLQAEGIPCFGPTAGAGQLESSKAFTKAFADRYGLPTAAYRVCESAEAARAALELFEPPYVIKADGLAAGKGVTVAQDRGEAEAAIDDAFGGRFGAAGARVVVEEFLEGEIGSLFALCDGEASMLFGWAQDHKRVFDGEQGPNTGGMGTYSPAPVFTPELVEQVRTRLVEPAFAGIAADGSPYRGVLFVELMATKHGPKLVEFNVRFGDPECQVLMLRLESDLVPYLVACANGTLGDMPPPVWRDEAAVCVVIAAKGYPGTPAAGGEIRGLDQDLGDDVVVFHAGTKRDADGTLRAAGGRVLNVCARGADLRTARDRAYAAIERIEFADGFCRSDIGWRALGR.

Residues 107 to 312 (KAFADRYGLP…LVPYLVACAN (206 aa)) form the ATP-grasp domain. 133-193 (LELFEPPYVI…EEFLEGEIGS (61 aa)) is an ATP binding site. Mg(2+)-binding residues include Glu-270, Glu-282, and Asn-284. Mn(2+) is bound by residues Glu-270, Glu-282, and Asn-284.

Belongs to the GARS family. The cofactor is Mg(2+). It depends on Mn(2+) as a cofactor.

The enzyme catalyses 5-phospho-beta-D-ribosylamine + glycine + ATP = N(1)-(5-phospho-beta-D-ribosyl)glycinamide + ADP + phosphate + H(+). Its pathway is purine metabolism; IMP biosynthesis via de novo pathway; N(1)-(5-phospho-D-ribosyl)glycinamide from 5-phospho-alpha-D-ribose 1-diphosphate: step 2/2. The chain is Phosphoribosylamine--glycine ligase from Phenylobacterium zucineum (strain HLK1).